Here is a 239-residue protein sequence, read N- to C-terminus: MTRAVCLLSGGLDSPTVLAYALSNGYEVFPLSFDYGQRHKKELESSKKICDYYHLNLKIIKIDLRAIGHSALTDNIDVPENDLKSIGNDIPVTYVPARNTIFLSIAAAYAETLNANEIFIGANAIDYSGYPDCRPEYFNKMEEALSLGTSIGLRNGIKINVPLQYLTKSDIVKLGRKLKVPYKLTWSCYNGRKKACGKCDSCLLRLKGFMEAGDFDDIEYEDYPEFYKTYLKNKHFDKF.

ATP is bound at residue 8–18 (LSGGLDSPTVL). Zn(2+) is bound by residues C188, C196, C199, and C202.

This sequence belongs to the QueC family. Zn(2+) is required as a cofactor.

The enzyme catalyses 7-carboxy-7-deazaguanine + NH4(+) + ATP = 7-cyano-7-deazaguanine + ADP + phosphate + H2O + H(+). The protein operates within purine metabolism; 7-cyano-7-deazaguanine biosynthesis. Functionally, catalyzes the ATP-dependent conversion of 7-carboxy-7-deazaguanine (CDG) to 7-cyano-7-deazaguanine (preQ(0)). This is 7-cyano-7-deazaguanine synthase from Picrophilus torridus (strain ATCC 700027 / DSM 9790 / JCM 10055 / NBRC 100828 / KAW 2/3).